The chain runs to 467 residues: FAD-dependent oxidoreductase dbaF (467 aa).

The first 20 residues, 1–20, serve as a signal peptide directing secretion; that stretch reads MKSVLASGALTLAFSLAALA. Residues Asn-96, Asn-134, Asn-337, Asn-391, and Asn-451 are each glycosylated (N-linked (GlcNAc...) asparagine).

This sequence belongs to the beta-cyclopiazonate dehydrogenase family. FAD serves as cofactor.

The protein operates within secondary metabolite biosynthesis. Its function is as follows. FAD-dependent oxidoreductase; part of the gene cluster that mediates the biosynthesis of the antibiotic 2,4-dihydroxy-3-methyl-6-(2-oxopropyl)benzaldehyde (DHMBA) and its derivatives. The direct non-reducing polyketide synthase dbaI product is 2,4-dihydroxy-3-methyl-6-(2-oxopropyl)benzaldehyde (DHMBA), produced by condensation of one acetyl-CoA starter unit with 4 malonyl-CoA units and one methylation step. The FAD-dependent monooxygenase dbaH is responsible for the synthesis of yellow pigments derived from the oxidation of DHMBA. The roles of dbaB, C, E and F have still to be determined. The polypeptide is FAD-dependent oxidoreductase dbaF (Emericella nidulans (strain FGSC A4 / ATCC 38163 / CBS 112.46 / NRRL 194 / M139) (Aspergillus nidulans)).